A 134-amino-acid polypeptide reads, in one-letter code: Putative nickel-responsive regulator (134 aa).

Ni(2+) is bound by residues histidine 78, histidine 89, histidine 91, and cysteine 97.

It belongs to the transcriptional regulatory CopG/NikR family. The cofactor is Ni(2+).

Its function is as follows. Transcriptional regulator. This chain is Putative nickel-responsive regulator, found in Chlorobium phaeobacteroides (strain DSM 266 / SMG 266 / 2430).